The chain runs to 578 residues: E3 ubiquitin-protein ligase Praja-1 (578 aa).

Residues 1 to 298 form a disordered region; it reads MSHQERIASQ…KVPRRRRTMA (298 aa). 2 stretches are compositionally biased toward basic and acidic residues: residues 57–67 and 107–116; these read DYSRYPPREYR and KFKDDPEKGA. Positions 151 to 163 are enriched in polar residues; that stretch reads SKQNGSSASQISS. Phosphothreonine is present on Thr-231. Composition is skewed to basic and acidic residues over residues 243–264 and 273–290; these read RWRD…RGRG and RYAE…ADKV. Phosphoserine is present on residues Ser-317 and Ser-319. The tract at residues 332-397 is disordered; sequence RSREQPQSSS…QASLEEGEIP (66 aa). Low complexity predominate over residues 359 to 373; that stretch reads AGAGSLASAGSNGSG. The span at 377–395 shows a compositional bias: acidic residues; that stretch reads EVQDPSLQEEEQASLEEGE. The RING-type zinc finger occupies 530-571; the sequence is CPICCSEYVKGEVATELPCHHYFHKPCVSIWLQKSGTCPVCR.

Binds ubiquitin-conjugating enzymes (E2s). Binds, in vitro and in vivo, the MAGE conserved domain of MAGED1. Binds weakly Necdin, in vitro. Interacts with UBE2D2. Post-translationally, substrate for E2-dependent ubiquitination. As to expression, expressed in brain, liver, kidney. Highest levels in brain where it is found in many regions including cortical and subcortical areas and in neurons of the amygdala. Weak expression also found in testis. Also expressed in developing embryo.

It catalyses the reaction S-ubiquitinyl-[E2 ubiquitin-conjugating enzyme]-L-cysteine + [acceptor protein]-L-lysine = [E2 ubiquitin-conjugating enzyme]-L-cysteine + N(6)-ubiquitinyl-[acceptor protein]-L-lysine.. Has E2-dependent E3 ubiquitin-protein ligase activity. Ubiquitinates MAGED1 antigen leading to its subsequent degradation by proteasome. May be involved in protein sorting. The sequence is that of E3 ubiquitin-protein ligase Praja-1 (Pja1) from Mus musculus (Mouse).